The following is a 342-amino-acid chain: Ferredoxin--NADP reductase (342 aa).

Positions 17, 36, 44, 49, 89, 124, 289, and 330 each coordinate FAD.

This sequence belongs to the ferredoxin--NADP reductase type 2 family. As to quaternary structure, homodimer. FAD serves as cofactor.

It catalyses the reaction 2 reduced [2Fe-2S]-[ferredoxin] + NADP(+) + H(+) = 2 oxidized [2Fe-2S]-[ferredoxin] + NADPH. The sequence is that of Ferredoxin--NADP reductase from Rhodopseudomonas palustris (strain HaA2).